Here is a 368-residue protein sequence, read N- to C-terminus: Ferredoxin--NADP reductase (368 aa).

Positions 56, 64, 69, 109, 144, 310, and 351 each coordinate FAD.

Belongs to the ferredoxin--NADP reductase type 2 family. Homodimer. FAD is required as a cofactor.

It catalyses the reaction 2 reduced [2Fe-2S]-[ferredoxin] + NADP(+) + H(+) = 2 oxidized [2Fe-2S]-[ferredoxin] + NADPH. The protein is Ferredoxin--NADP reductase of Leptothrix cholodnii (strain ATCC 51168 / LMG 8142 / SP-6) (Leptothrix discophora (strain SP-6)).